We begin with the raw amino-acid sequence, 147 residues long: Catabolic 3-dehydroquinase 2 (147 aa).

The active-site Proton acceptor is tyrosine 23. Substrate-binding residues include asparagine 74, histidine 80, and aspartate 87. Histidine 100 (proton donor) is an active-site residue. Substrate is bound by residues 101 to 102 and arginine 111; that span reads IT.

The protein belongs to the type-II 3-dehydroquinase family. As to quaternary structure, homododecamer. Adopts a ring-like structure, composed of an arrangement of two hexameric rings stacked on top of one another.

The catalysed reaction is 3-dehydroquinate = 3-dehydroshikimate + H2O. Its pathway is aromatic compound metabolism; 3,4-dihydroxybenzoate biosynthesis; 3,4-dihydroxybenzoate from 3-dehydroquinate: step 1/2. In terms of biological role, is involved in the catabolism of quinate. Allows the utilization of quinate as carbon source via the beta-ketoadipate pathway. The polypeptide is Catabolic 3-dehydroquinase 2 (Aspergillus terreus (strain NIH 2624 / FGSC A1156)).